We begin with the raw amino-acid sequence, 72 residues long: Small proline-rich protein 2A (72 aa).

The span at 1–11 (MSYQQQQCKQP) shows a compositional bias: low complexity. A disordered region spans residues 1-20 (MSYQQQQCKQPCQPPPVCPT). A run of 3 repeats spans residues 21 to 29 (PKCPEPCPP), 30 to 38 (PKCPEPCPP), and 39 to 47 (PKCPQPCPP). Positions 21-47 (PKCPEPCPPPKCPEPCPPPKCPQPCPP) are 3 X 9 AA tandem repeats of P-K-C-P-[EQ]-P-C-P-P. Positions 42–72 (PQPCPPQQCQQKYPPVTPSPPCQSKYPPKSK) are disordered.

It belongs to the cornifin (SPRR) family. Post-translationally, forms five pairs of intrachain disulfide bonds. In terms of tissue distribution, expressed in intestine; selectively expressed in goblet cells.

It is found in the secreted. The protein resides in the extracellular space. The protein localises to the cytoplasmic vesicle. It localises to the secretory vesicle. Functionally, gut bactericidal protein that selectively kills Gram-positive bacteria by binding to negatively charged lipids on bacterial membranes, leading to bacterial membrane permeabilization and disruption. Specifically binds lipids bearing negatively charged headgroups, such as phosphatidic acid, phosphatidylserine (PS), cardiolipin (CL), and phosphatidylinositol phosphates, but not to zwitterionic or neutral lipids. Induced by type-2 cytokines in response to helminth infection and is required to protect against helminth-induced bacterial invasion of intestinal tissue. May also be involved in the development of the cornified envelope of squamous epithelia; however, additional evidences are required to confirm this result in vivo. This chain is Small proline-rich protein 2A, found in Homo sapiens (Human).